The primary structure comprises 381 residues: Probable 26S proteasome regulatory subunit rpn9 (381 aa).

The PCI domain maps to 177 to 343; sequence QYYRHCLLYL…QIVTISSVQS (167 aa).

This sequence belongs to the proteasome subunit S11 family.

Its function is as follows. Acts as a regulatory subunit of the 26S proteasome which is involved in the ATP-dependent degradation of ubiquitinated proteins. The sequence is that of Probable 26S proteasome regulatory subunit rpn9 (rpn9) from Schizosaccharomyces pombe (strain 972 / ATCC 24843) (Fission yeast).